The following is a 351-amino-acid chain: Dihydroorotate dehydrogenase (quinone) (351 aa).

FMN is bound by residues 61–65 (AGLDK) and Thr85. Lys65 is a substrate binding site. Residue 110-114 (NRMGF) participates in substrate binding. FMN contacts are provided by Asn139 and Asn172. Asn172 contributes to the substrate binding site. Ser175 serves as the catalytic Nucleophile. Substrate is bound at residue Asn177. The FMN site is built by Lys217 and Thr245. Substrate is bound at residue 246–247 (NT). FMN-binding positions include Gly268, Gly297, and 318 to 319 (YS).

This sequence belongs to the dihydroorotate dehydrogenase family. Type 2 subfamily. Monomer. FMN serves as cofactor.

Its subcellular location is the cell membrane. It carries out the reaction (S)-dihydroorotate + a quinone = orotate + a quinol. It functions in the pathway pyrimidine metabolism; UMP biosynthesis via de novo pathway; orotate from (S)-dihydroorotate (quinone route): step 1/1. Catalyzes the conversion of dihydroorotate to orotate with quinone as electron acceptor. The polypeptide is Dihydroorotate dehydrogenase (quinone) (Xanthomonas oryzae pv. oryzae (strain MAFF 311018)).